Reading from the N-terminus, the 105-residue chain is Large ribosomal subunit protein uL24 (105 aa).

Belongs to the universal ribosomal protein uL24 family. As to quaternary structure, part of the 50S ribosomal subunit.

One of two assembly initiator proteins, it binds directly to the 5'-end of the 23S rRNA, where it nucleates assembly of the 50S subunit. In terms of biological role, one of the proteins that surrounds the polypeptide exit tunnel on the outside of the subunit. This Chromohalobacter salexigens (strain ATCC BAA-138 / DSM 3043 / CIP 106854 / NCIMB 13768 / 1H11) protein is Large ribosomal subunit protein uL24.